Consider the following 296-residue polypeptide: Nucleotide-binding protein M6_Spy0559 (296 aa).

Gly13–Thr20 lines the ATP pocket. GTP is bound at residue Asp63 to Ser66.

The protein belongs to the RapZ-like family.

Displays ATPase and GTPase activities. The sequence is that of Nucleotide-binding protein M6_Spy0559 from Streptococcus pyogenes serotype M6 (strain ATCC BAA-946 / MGAS10394).